Reading from the N-terminus, the 541-residue chain is Paromamine 6'-oxidase (541 aa).

Positions 1 to 29 are disordered; the sequence is MKRLRGTLPSDARHAWHPEPLGPAHRDGW. The active-site Proton acceptor is the His470.

Belongs to the GMC oxidoreductase family. It depends on FAD as a cofactor.

It catalyses the reaction 6'''-deamino-6'''-hydroxyneomycin C + O2 = 6'''-deamino-6'''-oxoneomycin C + H2O2. The enzyme catalyses paromamine + O2 = 6'-oxoparomamine + H2O2. Its pathway is antibiotic biosynthesis; neomycin biosynthesis. Functionally, glucosaminyl-6'-oxidase involved in the biosynthetic pathway of neomycin by mediating FAD-dependent dehydrogenation of paromamine to 6'-dehydro-6'-oxoparomamine. Works in combination with neamine transaminase to replace the 6-hydroxy group of paromamine with an amino group. Also able to collaborate with neomycin C transaminase to replace the 6'''-hydroxy group of 6'''-hydroxyneomycin C with an amino group. This Streptomyces fradiae (Streptomyces roseoflavus) protein is Paromamine 6'-oxidase (neoG).